The following is a 284-amino-acid chain: RNase adapter protein RapZ (284 aa).

8 to 15 is a binding site for ATP; it reads GRSGSGKS. 56–59 contacts GTP; that stretch reads DVRN. An RNA-binding region spans residues 266 to 284; it reads RSRGKNVQSRHRTLEKRKS.

Belongs to the RapZ-like family. RapZ subfamily. Homotrimer.

Functionally, modulates the synthesis of GlmS, by affecting the processing and stability of the regulatory small RNA GlmZ. When glucosamine-6-phosphate (GlcN6P) concentrations are high in the cell, RapZ binds GlmZ and targets it to cleavage by RNase E. Consequently, GlmZ is inactivated and unable to activate GlmS synthesis. Under low GlcN6P concentrations, RapZ is sequestered and inactivated by an other regulatory small RNA, GlmY, preventing GlmZ degradation and leading to synthesis of GlmS. This chain is RNase adapter protein RapZ, found in Cronobacter sakazakii (strain ATCC BAA-894) (Enterobacter sakazakii).